A 298-amino-acid polypeptide reads, in one-letter code: Probable pyridoxal 5'-phosphate synthase subunit SNZ2 (298 aa).

Residue D21 participates in D-ribose 5-phosphate binding. Catalysis depends on K78, which acts as the Schiff-base intermediate with D-ribose 5-phosphate. D-ribose 5-phosphate contacts are provided by residues G150, G213, and 234–235 (GS).

Belongs to the PdxS/SNZ family. As to quaternary structure, homohexamer. Interacts with THI11.

The enzyme catalyses aldehydo-D-ribose 5-phosphate + D-glyceraldehyde 3-phosphate + L-glutamine = pyridoxal 5'-phosphate + L-glutamate + phosphate + 3 H2O + H(+). Its pathway is cofactor biosynthesis; pyridoxal 5'-phosphate biosynthesis. In terms of biological role, catalyzes the formation of pyridoxal 5'-phosphate from ribose 5-phosphate (RBP), glyceraldehyde 3-phosphate (G3P) and ammonia. The ammonia is provided by a SNO isoform. Can also use ribulose 5-phosphate and dihydroxyacetone phosphate as substrates, resulting from enzyme-catalyzed isomerization of RBP and G3P, respectively. The polypeptide is Probable pyridoxal 5'-phosphate synthase subunit SNZ2 (SNZ2) (Saccharomyces cerevisiae (strain ATCC 204508 / S288c) (Baker's yeast)).